A 453-amino-acid chain; its full sequence is Malate dehydrogenase [NADP], chloroplastic (453 aa).

The N-terminal 68 residues, 1–68 (MAVVKLSPWA…RLSSPASIRC (68 aa)), are a transit peptide targeting the chloroplast. Cysteine 88 and cysteine 93 are disulfide-bonded. 117–123 (GAAGMIS) provides a ligand contact to NADP(+). Positions 198 and 204 each coordinate substrate. Residues asparagine 211, glutamine 218, and 235–237 (VGN) contribute to the NADP(+) site. Substrate-binding residues include asparagine 237 and arginine 268. The active-site Proton acceptor is histidine 293. Cysteine 429 and cysteine 441 are disulfide-bonded.

Belongs to the LDH/MDH superfamily. MDH type 2 family. In terms of assembly, homodimer.

The protein resides in the plastid. It localises to the chloroplast. It catalyses the reaction (S)-malate + NADP(+) = oxaloacetate + NADPH + H(+). With respect to regulation, chloroplast NADP-MDH is activated upon illumination. In order to be enzymatically active, disulfide bridges on the protein must be reduced by thioredoxin which receives electrons from ferredoxin and the electron transport system of photosynthesis. In terms of biological role, the chloroplastic, NADP-dependent form is essential for the photosynthesis C4 cycle, which allows plants to circumvent the problem of photorespiration. In C4 plants, NADP-MDH activity acts to convert oxaloacetate to malate in chloroplasts of mesophyll cells for transport to the bundle sheath cells. This chain is Malate dehydrogenase [NADP], chloroplastic, found in Flaveria bidentis (Coastal plain yellowtops).